Consider the following 479-residue polypeptide: Galactosylgalactosylxylosylprotein 3-beta-glucuronosyltransferase P (479 aa).

Residues 1–34 are Cytoplasmic-facing; the sequence is MKGGNYTSLGTCSGINVSGNVAGTRKMSLGKSIK. Residues 35-50 traverse the membrane as a helical; Signal-anchor for type II membrane protein segment; the sequence is MYLTIFILTTCIYMAL. Residues 51-479 lie on the Lumenal side of the membrane; that stretch reads YQYHISREPF…EHIDRLLVRP (429 aa). Residues asparagine 90, asparagine 97, asparagine 98, and asparagine 271 are each glycosylated (N-linked (GlcNAc...) asparagine). Residues 94 to 120 show a composition bias toward low complexity; sequence NTNNNSTTTSTTTTTAPTTPTTTTTTT. The disordered stretch occupies residues 94–122; the sequence is NTNNNSTTTSTTTTTAPTTPTTTTTTTVG. A Mn(2+)-binding site is contributed by aspartate 335. The active-site Proton acceptor is the glutamate 418. N-linked (GlcNAc...) asparagine glycosylation occurs at asparagine 460.

Belongs to the glycosyltransferase 43 family. Mn(2+) is required as a cofactor.

It localises to the golgi apparatus membrane. It carries out the reaction 3-O-(beta-D-galactosyl-(1-&gt;3)-beta-D-galactosyl-(1-&gt;4)-beta-D-xylosyl)-L-seryl-[protein] + UDP-alpha-D-glucuronate = 3-O-(beta-D-GlcA-(1-&gt;3)-beta-D-Gal-(1-&gt;3)-beta-D-Gal-(1-&gt;4)-beta-D-Xyl)-L-seryl-[protein] + UDP + H(+). It functions in the pathway protein modification; protein glycosylation. In terms of biological role, involved in the biosynthesis of L2/HNK-1 carbohydrate epitope on both glycolipids and glycoproteins. Enzyme has a broad specificity. The polypeptide is Galactosylgalactosylxylosylprotein 3-beta-glucuronosyltransferase P (GlcAT-P) (Drosophila melanogaster (Fruit fly)).